Reading from the N-terminus, the 569-residue chain is Ribonuclease J (569 aa).

Positions 81, 83, 85, 86, 150, and 172 each coordinate Zn(2+). 373 to 377 provides a ligand contact to substrate; that stretch reads HASGH. Position 399 (His399) interacts with Zn(2+).

The protein belongs to the metallo-beta-lactamase superfamily. RNA-metabolizing metallo-beta-lactamase-like family. Bacterial RNase J subfamily. Homodimer, may be a subunit of the RNA degradosome. Zn(2+) is required as a cofactor.

It is found in the cytoplasm. Its function is as follows. An RNase that has 5'-3' exonuclease and possibly endoonuclease activity. Involved in maturation of rRNA and in some organisms also mRNA maturation and/or decay. This is Ribonuclease J from Mycoplasma genitalium (strain ATCC 33530 / DSM 19775 / NCTC 10195 / G37) (Mycoplasmoides genitalium).